Reading from the N-terminus, the 99-residue chain is Gibberellin-regulated protein 2 (99 aa).

Positions 1–26 are cleaved as a signal peptide; the sequence is MAVFRSTLVLLLIIVCLTTYELHVHA.

Belongs to the GASA family. Six disulfide bonds may be present. In terms of tissue distribution, dry seeds and maturating siliques.

The protein localises to the secreted. Its function is as follows. Gibberellin-regulated protein that may function in hormonal controlled steps of development such as seed germination, flowering and seed maturation. The protein is Gibberellin-regulated protein 2 (GASA2) of Arabidopsis thaliana (Mouse-ear cress).